Consider the following 726-residue polypeptide: Sensory/regulatory protein RpfC (726 aa).

The next 5 helical transmembrane spans lie at 23 to 40 (NLIRIIITTLFISYLGWR), 52 to 72 (TWLILVGELLVSLGLMVAILL), 95 to 115 (IMAIQGEPASPLYAVCMWVTI), 128 to 148 (AATAMGSLCFLGAILISPYWK), and 152 to 172 (YLSWGLLLGLIAVPLYFDSLL). A Histidine kinase domain is found at 195-417 (NMSHEFRTPL…VFWFELPMAI (223 aa)). The residue at position 198 (H198) is a Phosphohistidine; by autocatalysis. A Response regulatory domain is found at 463–581 (RMLVADDHEA…KLLDTLADLA (119 aa)). 4-aspartylphosphate is present on D512. Residues 618 to 711 (GEEFERQFVR…KAGKDALDAR (94 aa)) enclose the HPt domain. H657 carries the phosphohistidine modification.

At low DSF concentrations, interacts with RpfF. In terms of processing, autophosphorylated. Activation may require a sequential transfer of a phosphate group from a His in the primary transmitter domain, to an Asp in the receiver domain and to a His in the secondary transmitter domain.

The protein resides in the cell inner membrane. It carries out the reaction ATP + protein L-histidine = ADP + protein N-phospho-L-histidine.. Binding of DSF to the sensor region causes allosteric change, which facilitates RpfC autophosphorylation. Its function is as follows. Hybrid sensor kinase that regulates diverse biological functions through two distinct molecular mechanisms. At low cell density, the extracellular concentration of the diffusible signaling factor (DSF) is below a threshold, and unphosphorylated RpfC is involved in the negative regulation of DSF synthesis, via direct interaction with the DSF synthase RpfF. Interaction prevents synthesis of DSF, which remains at a basal level. This activity does not involve the phosphorelay mechanism and is not dependent on RpfG. Is also member of the two-component regulatory system RpfG/RpfC, which is involved in the perception and response to DSF, which is essential for cell-cell signaling. At high cell density, the level of extracellular DSF increases and binding of DSF to the sensor region of RpfC causes autophosphorylation of RpfC, which results in the release of RpfF and the activation of RpfG via a four-step phosphorelay. Activation of RpfG leads to the positive regulation of biofilm dispersal and the production of virulence factors. This Xanthomonas campestris pv. campestris (strain ATCC 33913 / DSM 3586 / NCPPB 528 / LMG 568 / P 25) protein is Sensory/regulatory protein RpfC (rpfC).